A 121-amino-acid chain; its full sequence is Holo-[acyl-carrier-protein] synthase (121 aa).

Mg(2+)-binding residues include Asp8 and Glu58.

This sequence belongs to the P-Pant transferase superfamily. AcpS family. As to quaternary structure, homotrimer. Mg(2+) is required as a cofactor.

It is found in the cytoplasm. It carries out the reaction apo-[ACP] + CoA = holo-[ACP] + adenosine 3',5'-bisphosphate + H(+). Functionally, transfers the 4'-phosphopantetheine moiety from coenzyme A to a Ser of fatty acid acyl-carrier-protein ACP. Also modifies the D-alanyl carrier protein but fails to recognize PCP and AcpK, an acyl carrier protein of secondary metabolism. The protein is Holo-[acyl-carrier-protein] synthase of Bacillus subtilis (strain 168).